The chain runs to 183 residues: ATP synthase subunit delta (183 aa).

It belongs to the ATPase delta chain family. In terms of assembly, F-type ATPases have 2 components, F(1) - the catalytic core - and F(0) - the membrane proton channel. F(1) has five subunits: alpha(3), beta(3), gamma(1), delta(1), epsilon(1). F(0) has three main subunits: a(1), b(2) and c(10-14). The alpha and beta chains form an alternating ring which encloses part of the gamma chain. F(1) is attached to F(0) by a central stalk formed by the gamma and epsilon chains, while a peripheral stalk is formed by the delta and b chains.

Its subcellular location is the cell inner membrane. Its function is as follows. F(1)F(0) ATP synthase produces ATP from ADP in the presence of a proton or sodium gradient. F-type ATPases consist of two structural domains, F(1) containing the extramembraneous catalytic core and F(0) containing the membrane proton channel, linked together by a central stalk and a peripheral stalk. During catalysis, ATP synthesis in the catalytic domain of F(1) is coupled via a rotary mechanism of the central stalk subunits to proton translocation. Functionally, this protein is part of the stalk that links CF(0) to CF(1). It either transmits conformational changes from CF(0) to CF(1) or is implicated in proton conduction. The protein is ATP synthase subunit delta of Desulfosudis oleivorans (strain DSM 6200 / JCM 39069 / Hxd3) (Desulfococcus oleovorans).